Reading from the N-terminus, the 157-residue chain is Heat shock 22 kDa protein, chloroplastic (157 aa).

Positions glycine 40 to threonine 155 constitute a sHSP domain.

This sequence belongs to the small heat shock protein (HSP20) family.

It localises to the plastid. The protein localises to the chloroplast. In Chlamydomonas reinhardtii (Chlamydomonas smithii), this protein is Heat shock 22 kDa protein, chloroplastic.